Reading from the N-terminus, the 193-residue chain is Transcriptional regulator RamR (193 aa).

The HTH tetR-type domain maps to 7–66 (EDKKQALLEAATQAIAQSGIAASTAVIARNAGVAEGTLFRYFATKDELINTLYLHLKQDL). Positions 29 to 48 (STAVIARNAGVAEGTLFRYF) form a DNA-binding region, H-T-H motif.

As to quaternary structure, homodimer. May bind DNA either as a homodimer or as a pair of homodimers. Various chemicals reduce DNA-binding in vitro, including bile acids, such as cholic and chenodeoxycholic acids, and antimicrobial drugs, such as berberine, crystal violet, dequalinium, ethidium bromide and rhodamine 6G. Binds small regulatory RNA StyR3.

Transcriptional regulator. Represses the transcription of the transcriptional activator RamA and, thereby, leads to repression of the expression of the efflux pump subunits AcrA and AcrB, and TolC. Acts by binding directly to the promoter region of the ramA gene. Promoter binding may be inhibited partially by the small regulatory RNA StyR3, perhaps thereby ensuring a basal level of expression of RamA. In Salmonella typhimurium (strain LT2 / SGSC1412 / ATCC 700720), this protein is Transcriptional regulator RamR.